We begin with the raw amino-acid sequence, 233 residues long: Histone H1-I (233 aa).

Disordered stretches follow at residues 1 to 55 and 115 to 233; these read MSDS…HPPV and TGAS…KKSK. Positions 17–29 are enriched in low complexity; that stretch reads KAASPAKSPAKSP. The 75-residue stretch at 51 to 125 folds into the H15 domain; sequence THPPVSEMVV…GASGSFKMPP (75 aa). Basic and acidic residues-rich tracts occupy residues 128-137 and 146-155; these read KKVDRPESAP and TRVERKEKKV. 2 stretches are compositionally biased toward basic residues: residues 172-213 and 223-233; these read AAKK…KPTP and AAARKPAKKSK.

It belongs to the histone H1/H5 family.

The protein localises to the nucleus. The protein resides in the chromosome. In terms of biological role, histones H1 are necessary for the condensation of nucleosome chains into higher-order structures. This chain is Histone H1-I, found in Glyptotendipes barbipes (Midge).